Consider the following 479-residue polypeptide: Adenosylhomocysteinase (479 aa).

Substrate is bound by residues Thr-56, Asp-133, and Glu-199. 200–202 (TTT) serves as a coordination point for NAD(+). 2 residues coordinate substrate: Lys-229 and Asp-233. NAD(+) contacts are provided by residues Asn-234, 263–268 (GYGDVG), Glu-286, Asn-321, 342–344 (IGH), and Asn-390.

This sequence belongs to the adenosylhomocysteinase family. In terms of assembly, homotetramer. NAD(+) serves as cofactor.

The enzyme catalyses S-adenosyl-L-homocysteine + H2O = L-homocysteine + adenosine. It functions in the pathway amino-acid biosynthesis; L-homocysteine biosynthesis; L-homocysteine from S-adenosyl-L-homocysteine: step 1/1. Its function is as follows. Adenosylhomocysteine is a competitive inhibitor of S-adenosyl-L-methionine-dependent methyl transferase reactions; therefore adenosylhomocysteinase may play a key role in the control of methylations via regulation of the intracellular concentration of adenosylhomocysteine. In Plasmodium chabaudi chabaudi, this protein is Adenosylhomocysteinase.